The chain runs to 194 residues: Peptidyl-tRNA hydrolase (194 aa).

Y17 contacts tRNA. The Proton acceptor role is filled by H22. Residues Y68, N70, and N116 each coordinate tRNA.

It belongs to the PTH family. As to quaternary structure, monomer.

The protein resides in the cytoplasm. The catalysed reaction is an N-acyl-L-alpha-aminoacyl-tRNA + H2O = an N-acyl-L-amino acid + a tRNA + H(+). Functionally, hydrolyzes ribosome-free peptidyl-tRNAs (with 1 or more amino acids incorporated), which drop off the ribosome during protein synthesis, or as a result of ribosome stalling. In terms of biological role, catalyzes the release of premature peptidyl moieties from peptidyl-tRNA molecules trapped in stalled 50S ribosomal subunits, and thus maintains levels of free tRNAs and 50S ribosomes. The polypeptide is Peptidyl-tRNA hydrolase (Pseudoalteromonas translucida (strain TAC 125)).